The following is a 156-amino-acid chain: Glutamate-rich protein 2 (156 aa).

Disordered stretches follow at residues 29 to 66 (LQDI…TQAP) and 116 to 156 (EKTQ…EDGS). 2 stretches are compositionally biased toward acidic residues: residues 39-56 (SAED…DDED) and 140-156 (SDEE…EDGS).

The polypeptide is Glutamate-rich protein 2 (ERICH2) (Homo sapiens (Human)).